A 396-amino-acid polypeptide reads, in one-letter code: DNA polymerase IV (396 aa).

The UmuC domain maps to 2–182 (ILHVDMDAFY…LPVSRLWGVG (181 aa)). Mg(2+) contacts are provided by Asp-6 and Asp-100. Residue Glu-101 is part of the active site.

Belongs to the DNA polymerase type-Y family. As to quaternary structure, monomer. Mg(2+) is required as a cofactor.

It is found in the cytoplasm. The enzyme catalyses DNA(n) + a 2'-deoxyribonucleoside 5'-triphosphate = DNA(n+1) + diphosphate. In terms of biological role, poorly processive, error-prone DNA polymerase involved in untargeted mutagenesis. Copies undamaged DNA at stalled replication forks, which arise in vivo from mismatched or misaligned primer ends. These misaligned primers can be extended by PolIV. Exhibits no 3'-5' exonuclease (proofreading) activity. May be involved in translesional synthesis, in conjunction with the beta clamp from PolIII. In Rhodopirellula baltica (strain DSM 10527 / NCIMB 13988 / SH1), this protein is DNA polymerase IV.